We begin with the raw amino-acid sequence, 946 residues long: MSELAKFFIEVAEKWQRRWAEAKVFEPSPQPGRPKFFITAAYPYPNGTIHIGHGRTYLVADVMARFRRHLGYNVLFPMAFHYTGTPILTIAEVIAAGDKAVIEEYKEIYGVSDDDIKKMGDPLYLAQYFHRRSKEAMIKFGLGIDWSREFTTIDPEYQRFIQWQFEKLRKRGLIVRGRHPVGWCPRHQMPVGAHDTKDDKEPEIGQWTLIYFVDGEGLVYPTATLRPETVPGVTNIWINPDAEYVVAEFEGRKMVLSKDAAYRLSFQGNVKVIREARGREFVGRRVLNPVTGEWVPVYEAKFVDPKVGTGVVMSVPAHAPYDYAALRDMGEVKLIPLIRVEGYGEYPAKEVVERMGIKSQTDPALEEATREVYSAEYTRGVVREDVVDRIAPHLPEPARSMVRAVFKLYFAGRPVKEAREFISKWLAEAGLGGVMYDIMNKPVYCRCGTEIVVKVLEDQWFINYGERGWKQLARQLVEEMAIIPQEAKAQFLATIDWLDKRACARTRGLGTPLPWSQGWVIESLSDSTIYMAFYTVIKKIRALGLRPEQLTEEFWDYVFLGQGSAAEVAKRIGVDPAALEEIRREFDYWYPLDSRNSGKDLIPNHLTFFIFNHVAIFPREKWPRQIVANGWVLREGEKMSKSKRNVLPLDKAVALYGPDPLRATLAIAAEVEQDLDFRDAEARRNSQQLMSIYNLVQRLAQSAVEREETWLDKWLISEVAHVLERAREAYEKVRLRQAAVELLYNAEAVFSQYLSMVDKPSKSAVEAAKAWVVALEPIVPHFAEELWQILGGEGFAATAPWPKLSPDPAALLAKRYVDMLIEDVKNIPAYKAGAKRVAIYVNGNYQWLRAAVGKDVKAAIEAGAPPQLAKRLVDFAKSMGEEVRGLVERVEQFDEYAALQSYKRYVEKALGVPVDIYKADDPQAPDLGGKKKAALPLKPGIFIEVG.

The 'HIGH' region signature appears at 43-53; the sequence is PYPNGTIHIGH. The short motif at 638 to 642 is the 'KMSKS' region element; sequence KMSKS. Lys641 lines the ATP pocket.

This sequence belongs to the class-I aminoacyl-tRNA synthetase family.

The protein resides in the cytoplasm. The catalysed reaction is tRNA(Leu) + L-leucine + ATP = L-leucyl-tRNA(Leu) + AMP + diphosphate. The sequence is that of Leucine--tRNA ligase from Pyrobaculum calidifontis (strain DSM 21063 / JCM 11548 / VA1).